We begin with the raw amino-acid sequence, 404 residues long: Multidrug resistance protein MdtG (404 aa).

The next 11 helical transmembrane spans lie at 19–39 (LGCF…PLYV), 56–76 (LVFS…GGLA), 90–110 (LGMA…QFLI), 113–133 (ALLG…ATQV), 144–164 (TLST…GLLA), 171–191 (PVFF…FFFI), 222–242 (LFVT…ILTL), 254–274 (IAFI…LSAP), 288–308 (ILIV…FVQT), 317–337 (FLLG…LVYN), and 376–396 (AVFC…WNSL).

This sequence belongs to the major facilitator superfamily. DHA1 family. MdtG (TC 2.A.1.2.20) subfamily.

The protein resides in the cell inner membrane. The chain is Multidrug resistance protein MdtG from Salmonella heidelberg (strain SL476).